Consider the following 309-residue polypeptide: Probable manganese-dependent inorganic pyrophosphatase (309 aa).

Mn(2+) contacts are provided by His-9, Asp-13, Asp-15, Asp-75, His-97, and Asp-149.

The protein belongs to the PPase class C family. Requires Mn(2+) as cofactor.

The protein localises to the cytoplasm. The enzyme catalyses diphosphate + H2O = 2 phosphate + H(+). The polypeptide is Probable manganese-dependent inorganic pyrophosphatase (Bacillus mycoides (strain KBAB4) (Bacillus weihenstephanensis)).